Reading from the N-terminus, the 124-residue chain is Small ribosomal subunit protein uS12 (124 aa).

Residues 1-24 (MPTISQLVRKGRAKITKKSKSAAL) form a disordered region. Residues 9–20 (RKGRAKITKKSK) show a composition bias toward basic residues. Residue D89 is modified to 3-methylthioaspartic acid. Residues 105–124 (AGVEGRTQRRSKYGAKRPKK) are disordered. The segment covering 112 to 124 (QRRSKYGAKRPKK) has biased composition (basic residues).

Belongs to the universal ribosomal protein uS12 family. As to quaternary structure, part of the 30S ribosomal subunit. Contacts proteins S8 and S17. May interact with IF1 in the 30S initiation complex.

Functionally, with S4 and S5 plays an important role in translational accuracy. Interacts with and stabilizes bases of the 16S rRNA that are involved in tRNA selection in the A site and with the mRNA backbone. Located at the interface of the 30S and 50S subunits, it traverses the body of the 30S subunit contacting proteins on the other side and probably holding the rRNA structure together. The combined cluster of proteins S8, S12 and S17 appears to hold together the shoulder and platform of the 30S subunit. The chain is Small ribosomal subunit protein uS12 from Christiangramia forsetii (strain DSM 17595 / CGMCC 1.15422 / KT0803) (Gramella forsetii).